A 487-amino-acid polypeptide reads, in one-letter code: Sugar transporter ERD6-like 6 (487 aa).

S2 bears the N-acetylserine mark. 12 helical membrane passes run 46–66, 89–109, 115–135, 146–166, 178–198, 201–221, 284–304, 320–340, 347–367, 389–409, 425–445, and 451–471; these read ISVLACVLIVALGPIQFGFTC, VFGSLSNVGAMVGAIASGQIA, KGSLMIAAIPNIIGWLCISFA, LLEGFGVGIISYTVPVYIAEI, VNQLSVTIGIMLAYLLGLFVP, ILAVLGILPCTLLIPGLFFIP, LMVGIGLLVLQQLGGINGVLF, AATFGVGAIQVVATAISTWLV, LLLTISSVGMTISLVIVAAAF, VGVVAMVVFFSLGMGPIPWLI, IATLANWFFSWLITMTANLLL, and GTFTLYGLVCAFTVVFVTLWV.

This sequence belongs to the major facilitator superfamily. Sugar transporter (TC 2.A.1.1) family.

It localises to the membrane. Its function is as follows. Sugar transporter. The chain is Sugar transporter ERD6-like 6 from Arabidopsis thaliana (Mouse-ear cress).